Consider the following 255-residue polypeptide: 5-oxoprolinase subunit A 1 (255 aa).

The protein belongs to the LamB/PxpA family. As to quaternary structure, forms a complex composed of PxpA, PxpB and PxpC.

It carries out the reaction 5-oxo-L-proline + ATP + 2 H2O = L-glutamate + ADP + phosphate + H(+). Its function is as follows. Catalyzes the cleavage of 5-oxoproline to form L-glutamate coupled to the hydrolysis of ATP to ADP and inorganic phosphate. The sequence is that of 5-oxoprolinase subunit A 1 from Bradyrhizobium diazoefficiens (strain JCM 10833 / BCRC 13528 / IAM 13628 / NBRC 14792 / USDA 110).